Here is a 473-residue protein sequence, read N- to C-terminus: Ribosomal protein uS12 methylthiotransferase RimO (473 aa).

Positions 30–141 (ASVAVLHLGC…IVQIIERVER (112 aa)) constitute an MTTase N-terminal domain. Residues Cys-39, Cys-75, Cys-104, Cys-179, Cys-183, and Cys-186 each coordinate [4Fe-4S] cluster. The 230-residue stretch at 165–394 (TTHAPVAYLR…MQVQQGITFR (230 aa)) folds into the Radical SAM core domain. The 67-residue stretch at 397–463 (REQVGRVVPV…PYDLFGQVVA (67 aa)) folds into the TRAM domain.

Belongs to the methylthiotransferase family. RimO subfamily. [4Fe-4S] cluster serves as cofactor.

Its subcellular location is the cytoplasm. It carries out the reaction L-aspartate(89)-[ribosomal protein uS12]-hydrogen + (sulfur carrier)-SH + AH2 + 2 S-adenosyl-L-methionine = 3-methylsulfanyl-L-aspartate(89)-[ribosomal protein uS12]-hydrogen + (sulfur carrier)-H + 5'-deoxyadenosine + L-methionine + A + S-adenosyl-L-homocysteine + 2 H(+). Its function is as follows. Catalyzes the methylthiolation of an aspartic acid residue of ribosomal protein uS12. The protein is Ribosomal protein uS12 methylthiotransferase RimO of Synechococcus sp. (strain JA-2-3B'a(2-13)) (Cyanobacteria bacterium Yellowstone B-Prime).